The primary structure comprises 195 residues: Putative manganese efflux pump MntP (195 aa).

6 helical membrane-spanning segments follow: residues 4–24 (ILIT…SLAM), 39–59 (FVLT…NLGL), 64–84 (FLGV…GWQM), 120–140 (ILLL…TLGT), 145–165 (ILIT…VGFA), and 175–195 (GSYA…KFVV).

The protein belongs to the MntP (TC 9.B.29) family.

It localises to the cell membrane. In terms of biological role, probably functions as a manganese efflux pump. The sequence is that of Putative manganese efflux pump MntP from Syntrophomonas wolfei subsp. wolfei (strain DSM 2245B / Goettingen).